We begin with the raw amino-acid sequence, 81 residues long: Exodeoxyribonuclease 7 small subunit (81 aa).

The interval 59-81 is disordered; it reads KLVDKDGNEKTLDPQNASAPEEE. A compositionally biased stretch (basic and acidic residues) spans 60 to 70; it reads LVDKDGNEKTL. The segment covering 71–81 has biased composition (polar residues); sequence DPQNASAPEEE.

Belongs to the XseB family. As to quaternary structure, heterooligomer composed of large and small subunits.

It is found in the cytoplasm. The catalysed reaction is Exonucleolytic cleavage in either 5'- to 3'- or 3'- to 5'-direction to yield nucleoside 5'-phosphates.. Functionally, bidirectionally degrades single-stranded DNA into large acid-insoluble oligonucleotides, which are then degraded further into small acid-soluble oligonucleotides. This Lactobacillus gasseri (strain ATCC 33323 / DSM 20243 / BCRC 14619 / CIP 102991 / JCM 1131 / KCTC 3163 / NCIMB 11718 / NCTC 13722 / AM63) protein is Exodeoxyribonuclease 7 small subunit.